The primary structure comprises 475 residues: Ankyrin repeat, SAM and basic leucine zipper domain-containing protein 1 (475 aa).

Residues 1 to 25 (MAAGALRGLPVAGGGESSESEDDGW) form a disordered region. A phosphoserine mark is found at Ser17, Ser18, and Ser20. 6 ANK repeats span residues 45–74 (EKKEKFKKAMTIGDVSLVQELLDSGISVDS), 78–107 (YGWTPLMYAASVANAELVRVLLDRGANASF), 110–144 (DKQTILITACSAHGSEEQILKCVELLLSRNADPNV), 148–177 (RLMTPIMYAARDGHTQVVALLVAHGAEVNT), 181–210 (NGYTALTWAARQGHKNIVLKLLELGANKML), and 214–243 (DGKMPSEIAKRNKHHEIFNLLSFTLNPLEG). Residues 272–334 (SYTAFGDLEV…KILAALKELQ (63 aa)) form the SAM domain.

In terms of assembly, interacts with DDX4, PIWIL1, RANBP9 and TDRD1.

It localises to the cytoplasm. In terms of biological role, plays a central role during spermatogenesis by repressing transposable elements and preventing their mobilization, which is essential for the germline integrity. Acts via the piRNA metabolic process, which mediates the repression of transposable elements during meiosis by forming complexes composed of piRNAs and Piwi proteins and governs the methylation and subsequent repression of transposons. Its association with pi-bodies suggests a participation in the primary piRNAs metabolic process. Required prior to the pachytene stage to facilitate the production of multiple types of piRNAs, including those associated with repeats involved in the regulation of retrotransposons. May act by mediating protein-protein interactions during germ cell maturation. This Papio anubis (Olive baboon) protein is Ankyrin repeat, SAM and basic leucine zipper domain-containing protein 1 (ASZ1).